The sequence spans 175 residues: Riboflavin kinase (175 aa).

54 to 59 lines the CDP pocket; sequence GLGEGK. Thr-83 and Asn-85 together coordinate Mg(2+). 2 residues coordinate FMN: Thr-142 and Glu-150. 155–158 serves as a coordination point for CDP; the sequence is FHLR.

Belongs to the archaeal riboflavin kinase family. Requires Mg(2+) as cofactor.

The enzyme catalyses riboflavin + CTP = CDP + FMN + H(+). It participates in cofactor biosynthesis; FMN biosynthesis; FMN from riboflavin (CTP route): step 1/1. In terms of biological role, catalyzes the CTP-dependent phosphorylation of riboflavin (vitamin B2) to form flavin mononucleotide (FMN). The protein is Riboflavin kinase of Saccharolobus solfataricus (strain ATCC 35092 / DSM 1617 / JCM 11322 / P2) (Sulfolobus solfataricus).